The primary structure comprises 240 residues: Ribosomal RNA small subunit methyltransferase G (240 aa).

S-adenosyl-L-methionine-binding positions include Gly79, Phe84, 130-131, and Arg149; that span reads AE.

The protein belongs to the methyltransferase superfamily. RNA methyltransferase RsmG family.

The protein resides in the cytoplasm. Specifically methylates the N7 position of a guanine in 16S rRNA. This chain is Ribosomal RNA small subunit methyltransferase G, found in Desulforamulus reducens (strain ATCC BAA-1160 / DSM 100696 / MI-1) (Desulfotomaculum reducens).